Reading from the N-terminus, the 99-residue chain is Nucleoid-associated protein SPy_1862/M5005_Spy1580 (99 aa).

This sequence belongs to the YbaB/EbfC family. As to quaternary structure, homodimer.

It is found in the cytoplasm. Its subcellular location is the nucleoid. Binds to DNA and alters its conformation. May be involved in regulation of gene expression, nucleoid organization and DNA protection. In Streptococcus pyogenes serotype M1, this protein is Nucleoid-associated protein SPy_1862/M5005_Spy1580.